Consider the following 471-residue polypeptide: U1 small nuclear ribonucleoprotein 70 kDa (471 aa).

A disordered region spans residues 48 to 78 (FEDPRDAPPPTRAETREERMERKRREKIERR). The segment covering 60-78 (AETREERMERKRREKIERR) has biased composition (basic and acidic residues). The interval 92–205 (HNDQNAQGDA…GGGLGGTRRG (114 aa)) is required for interaction with U1 RNA. The RRM domain maps to 103–184 (KTLFVARVNY…RRVLVDVERG (82 aa)). Positions 190–471 (WRPRRLGGGL…NGYMMEPPME (282 aa)) are disordered. The segment covering 195–204 (LGGGLGGTRR) has biased composition (gly residues). Over residues 210–246 (NIRHSGRDDTSRYDERDRERERDRRERSREREKEPRE) the composition is skewed to basic and acidic residues. Residues 247–261 (RRRSRSRERRRKSRS) are compositionally biased toward basic residues. Basic and acidic residues predominate over residues 262–288 (REKEERKRTREKSKDKDKEKDKDNKDR). Basic residues predominate over residues 289–298 (DRKRRSRSRE). A compositionally biased stretch (basic and acidic residues) spans 299 to 316 (RKRERDRDREKKEERVEA). The segment covering 317 to 326 (EVPEADDAPQ) has biased composition (acidic residues). The segment covering 339–428 (IELKQEPEEK…RSEKREERVP (90 aa)) has biased composition (basic and acidic residues).

In terms of assembly, component of the U1 snRNP. The U1 snRNP is composed of the U1 snRNA and the 7 core Sm proteins snrpb, snrpd1, snrpd2, snrpd3, snrpe, snrpf and snrpg that assemble in a heptameric protein ring on the Sm site of the small nuclear RNA to form the core snRNP, and at least three U1 snRNP-specific proteins snrnp70/U1-70K, snrpa/U1-A and snrpc/U1-C.

Its subcellular location is the nucleus speckle. It localises to the nucleus. The protein localises to the nucleoplasm. In terms of biological role, component of the spliceosomal U1 snRNP, which is essential for recognition of the pre-mRNA 5' splice-site and the subsequent assembly of the spliceosome. snrnp70 binds to the loop I region of U1-snRNA. This chain is U1 small nuclear ribonucleoprotein 70 kDa (snrnp70), found in Xenopus laevis (African clawed frog).